A 452-amino-acid polypeptide reads, in one-letter code: Bifunctional protein GlmU (452 aa).

Residues 1 to 232 form a pyrophosphorylase region; it reads MTSRTSLTIV…EDEVRGINTK (232 aa). UDP-N-acetyl-alpha-D-glucosamine is bound by residues 11 to 14, Lys25, Gln78, and 83 to 84; these read LAAG and GT. Position 108 (Asp108) interacts with Mg(2+). Gly144, Glu158, Asn173, and Asn230 together coordinate UDP-N-acetyl-alpha-D-glucosamine. Asn230 contacts Mg(2+). Residues 233-253 form a linker region; the sequence is AQLAEAEAVMQARLRQAALDA. Positions 254–452 are N-acetyltransferase; the sequence is GVTMIAPETV…KTRGKTRPAK (199 aa). Arg319 and Lys337 together coordinate UDP-N-acetyl-alpha-D-glucosamine. The active-site Proton acceptor is His349. 2 residues coordinate UDP-N-acetyl-alpha-D-glucosamine: Tyr352 and Asn363. Acetyl-CoA is bound by residues Ala366, 372-373, Ser391, Ser409, and Arg426; that span reads NY.

This sequence in the N-terminal section; belongs to the N-acetylglucosamine-1-phosphate uridyltransferase family. The protein in the C-terminal section; belongs to the transferase hexapeptide repeat family. In terms of assembly, homotrimer. It depends on Mg(2+) as a cofactor.

It localises to the cytoplasm. The catalysed reaction is alpha-D-glucosamine 1-phosphate + acetyl-CoA = N-acetyl-alpha-D-glucosamine 1-phosphate + CoA + H(+). It catalyses the reaction N-acetyl-alpha-D-glucosamine 1-phosphate + UTP + H(+) = UDP-N-acetyl-alpha-D-glucosamine + diphosphate. The protein operates within nucleotide-sugar biosynthesis; UDP-N-acetyl-alpha-D-glucosamine biosynthesis; N-acetyl-alpha-D-glucosamine 1-phosphate from alpha-D-glucosamine 6-phosphate (route II): step 2/2. It functions in the pathway nucleotide-sugar biosynthesis; UDP-N-acetyl-alpha-D-glucosamine biosynthesis; UDP-N-acetyl-alpha-D-glucosamine from N-acetyl-alpha-D-glucosamine 1-phosphate: step 1/1. It participates in bacterial outer membrane biogenesis; LPS lipid A biosynthesis. In terms of biological role, catalyzes the last two sequential reactions in the de novo biosynthetic pathway for UDP-N-acetylglucosamine (UDP-GlcNAc). The C-terminal domain catalyzes the transfer of acetyl group from acetyl coenzyme A to glucosamine-1-phosphate (GlcN-1-P) to produce N-acetylglucosamine-1-phosphate (GlcNAc-1-P), which is converted into UDP-GlcNAc by the transfer of uridine 5-monophosphate (from uridine 5-triphosphate), a reaction catalyzed by the N-terminal domain. In Rhodopseudomonas palustris (strain BisA53), this protein is Bifunctional protein GlmU.